A 266-amino-acid chain; its full sequence is Undecaprenyl-diphosphatase (266 aa).

Transmembrane regions (helical) follow at residues 1-21 (MDTF…FLPI), 39-59 (QGLS…VIYF), 87-107 (WWII…KDFI), 111-131 (LRSA…LWWA), 149-169 (ALLI…RSGA), 183-203 (AAAR…AILV), 218-238 (ALTL…HYFL), and 246-266 (MTPF…FIFL).

The protein belongs to the UppP family.

The protein localises to the cell inner membrane. It carries out the reaction di-trans,octa-cis-undecaprenyl diphosphate + H2O = di-trans,octa-cis-undecaprenyl phosphate + phosphate + H(+). Catalyzes the dephosphorylation of undecaprenyl diphosphate (UPP). Confers resistance to bacitracin. This Shewanella sp. (strain MR-7) protein is Undecaprenyl-diphosphatase.